Reading from the N-terminus, the 152-residue chain is Ribonuclease H (152 aa).

In terms of domain architecture, RNase H type-1 spans 1–142; sequence MDSKVVIYTD…ADKLAVQGRE (142 aa). Mg(2+) is bound by residues aspartate 10, glutamate 48, aspartate 70, and aspartate 134.

The protein belongs to the RNase H family. As to quaternary structure, monomer. Mg(2+) serves as cofactor.

It localises to the cytoplasm. The enzyme catalyses Endonucleolytic cleavage to 5'-phosphomonoester.. Its function is as follows. Endonuclease that specifically degrades the RNA of RNA-DNA hybrids. The sequence is that of Ribonuclease H from Rickettsia felis (strain ATCC VR-1525 / URRWXCal2) (Rickettsia azadi).